A 366-amino-acid polypeptide reads, in one-letter code: ATP-dependent 6-phosphofructokinase (366 aa).

ATP is bound by residues Gly16, 78-79 (RE), and 118-121 (GNGT). Positions 74 to 94 (LGTSREKPFKPDPGEKDSEAG) are disordered. Basic and acidic residues predominate over residues 77–94 (SREKPFKPDPGEKDSEAG). Residue Asn119 coordinates Mg(2+). Substrate is bound by residues 141–143 (TID), Arg178, 185–187 (MGH), Glu238, Arg282, and 288–291 (YLQR). The active-site Proton acceptor is the Asp143.

This sequence belongs to the phosphofructokinase type A (PFKA) family. Mixed-substrate PFK group III subfamily. Homodimer or homotetramer. Mg(2+) is required as a cofactor.

The protein resides in the cytoplasm. It catalyses the reaction beta-D-fructose 6-phosphate + ATP = beta-D-fructose 1,6-bisphosphate + ADP + H(+). It participates in carbohydrate degradation; glycolysis; D-glyceraldehyde 3-phosphate and glycerone phosphate from D-glucose: step 3/4. Catalyzes the phosphorylation of D-fructose 6-phosphate to fructose 1,6-bisphosphate by ATP, the first committing step of glycolysis. The sequence is that of ATP-dependent 6-phosphofructokinase from Spirochaeta thermophila (strain ATCC 49972 / DSM 6192 / RI 19.B1).